Here is a 583-residue protein sequence, read N- to C-terminus: Scarecrow-like protein 30 (583 aa).

2 disordered regions span residues 107–154 and 182–205; these read GDLE…RKSK and EATE…KSDQ. Positions 115-124 are enriched in polar residues; sequence GNFSSITSLH. A compositionally biased stretch (basic and acidic residues) spans 131-140; that stretch reads ESTRRYRHRD. One can recognise a GRAS domain in the interval 200–579; sequence QQKSDQPVDM…RVLYAVSCWK (380 aa). The leucine repeat I (LRI) stretch occupies residues 207 to 266; sequence VDMRNLLMQCAQAVASFDQRRAFEKLKEIREHSSRHGDATQRLGYHFAEALEARITGTMT. Positions 285–350 are VHIID; sequence YKGFVQACPT…IGPPLLRVTG (66 aa). The VHIID motif lies at 316–320; sequence LHIID. Residues 366–398 are leucine repeat II (LRII); that stretch reads ETGRRLKRFCDKFNVPFEYSFIAKNWENITLDD. Positions 407 to 501 are PFYRE; it reads TVVNCILRLQ…RELIIRDAMS (95 aa). The segment at 504 to 579 is SAW; it reads ACEGSERFAR…RVLYAVSCWK (76 aa).

The protein belongs to the GRAS family. Interacts with SNRNP35 and CYP95. Expressed in seedlings, leaves, sepals, stamen and pistil, and in the quiescent center of root meristem.

The protein resides in the nucleus. In terms of biological role, probable transcription factor involved in plant development. The polypeptide is Scarecrow-like protein 30 (SCL30) (Arabidopsis thaliana (Mouse-ear cress)).